Reading from the N-terminus, the 337-residue chain is F-box protein At2g27310 (337 aa).

The F-box domain occupies aspartate 10 to isoleucine 58.

The polypeptide is F-box protein At2g27310 (Arabidopsis thaliana (Mouse-ear cress)).